Here is a 380-residue protein sequence, read N- to C-terminus: Ribosomal RNA large subunit methyltransferase F (380 aa).

The disordered stretch occupies residues 1-32 (MSHKTKPSTQERKAGKPSAPKRKVISKSPNSK).

Belongs to the methyltransferase superfamily. METTL16/RlmF family.

It is found in the cytoplasm. It catalyses the reaction adenosine(1618) in 23S rRNA + S-adenosyl-L-methionine = N(6)-methyladenosine(1618) in 23S rRNA + S-adenosyl-L-homocysteine + H(+). Its function is as follows. Specifically methylates the adenine in position 1618 of 23S rRNA. The protein is Ribosomal RNA large subunit methyltransferase F of Shewanella halifaxensis (strain HAW-EB4).